Here is a 356-residue protein sequence, read N- to C-terminus: MLKVPLSDVLSQKMLFLKSFRYFHCTKYFSRDNASSTTDIFRNAMKRKRELANLKEQSHGNVARNAAFPKEYIKRPKQVPRNATNRKKILITWSTGTDRAKEAANSVVSEIFKKNHKGNIKVVDPTTHRIEPSNIRYFAKGIDLDKVGLSIVNVEQIDNENQIPLVKIVESRVALKKYSDFLAKKKEKELMELGVLNKSYKNLVTDKKEDNLKHIKISWQIESDDLKRQKAHEIVSLLKKGNKVTLYLDDKNNINSNNWLENFEELDRSQKGEPPRLPESVFQKRAAVLETLKEIVSEYANDPVLLGNMNSKMIMKLIPKDVKPQNNDKRALKELRKKERQEKLQKRIQRKKMNEM.

The transit peptide at 1-32 (MLKVPLSDVLSQKMLFLKSFRYFHCTKYFSRD) directs the protein to the mitochondrion.

Belongs to the AIM23 family.

The protein resides in the mitochondrion. This is Altered inheritance of mitochondria protein 23, mitochondrial (AIM23) from Saccharomyces cerevisiae (strain YJM789) (Baker's yeast).